Here is a 165-residue protein sequence, read N- to C-terminus: Large ribosomal subunit protein uL5 (165 aa).

The protein belongs to the universal ribosomal protein uL5 family. As to quaternary structure, part of the 50S ribosomal subunit; contacts the 5S rRNA and probably tRNA. Forms a bridge to the 30S subunit in the 70S ribosome.

Its function is as follows. This is one of the proteins that bind and probably mediate the attachment of the 5S RNA into the large ribosomal subunit, where it forms part of the central protuberance. In the 70S ribosome it contacts protein S13 of the 30S subunit (bridge B1b), connecting the 2 subunits; this bridge is implicated in subunit movement. May contact the P site tRNA; the 5S rRNA and some of its associated proteins might help stabilize positioning of ribosome-bound tRNAs. The sequence is that of Large ribosomal subunit protein uL5 from Methanosarcina acetivorans (strain ATCC 35395 / DSM 2834 / JCM 12185 / C2A).